The sequence spans 769 residues: Phosphatidylinositol 4-phosphate 5-kinase 8 (769 aa).

8 MORN repeats span residues 16-38 (YSGQ…DGII), 39-61 (YEGD…SGAK), 62-84 (YEGD…DGSV), 85-107 (YAGA…NSDV), 108-130 (YDGS…NGNR), 131-153 (FIGN…NGDL), 154-176 (FNGF…DGGF), and 177-198 (YFGT…AGSK). Residues 266–289 (PPRDFMHHGPSSKSARSVDSGQSE) form a disordered region. The segment covering 276-288 (SSKSARSVDSGQS) has biased composition (polar residues). Residues 344 to 765 (WNHYLMLNLQ…RFIDFLLKVF (422 aa)) form the PIPK domain. The interval 725–746 (YNMKKKVEHTCKSMKYDPMTIS) is activation loop.

It carries out the reaction a 1,2-diacyl-sn-glycero-3-phospho-(1D-myo-inositol 4-phosphate) + ATP = a 1,2-diacyl-sn-glycero-3-phospho-(1D-myo-inositol-4,5-bisphosphate) + ADP + H(+). The chain is Phosphatidylinositol 4-phosphate 5-kinase 8 (PIP5K8) from Arabidopsis thaliana (Mouse-ear cress).